The following is a 210-amino-acid chain: Uridine kinase (210 aa).

12-19 (GGSGSGKT) contacts ATP.

It belongs to the uridine kinase family.

The protein resides in the cytoplasm. The catalysed reaction is uridine + ATP = UMP + ADP + H(+). The enzyme catalyses cytidine + ATP = CMP + ADP + H(+). It participates in pyrimidine metabolism; CTP biosynthesis via salvage pathway; CTP from cytidine: step 1/3. It functions in the pathway pyrimidine metabolism; UMP biosynthesis via salvage pathway; UMP from uridine: step 1/1. The polypeptide is Uridine kinase (Bacillus pumilus (strain SAFR-032)).